A 278-amino-acid polypeptide reads, in one-letter code: Large ribosomal subunit protein uL2 (278 aa).

The tract at residues 201–278 is disordered; that stretch reads HGNINDGKAG…IMRSRHQRKK (78 aa). A compositionally biased stretch (basic residues) spans 210-221; that stretch reads GRSRWRGKRPHV.

Belongs to the universal ribosomal protein uL2 family. Part of the 50S ribosomal subunit. Forms a bridge to the 30S subunit in the 70S ribosome.

One of the primary rRNA binding proteins. Required for association of the 30S and 50S subunits to form the 70S ribosome, for tRNA binding and peptide bond formation. It has been suggested to have peptidyltransferase activity; this is somewhat controversial. Makes several contacts with the 16S rRNA in the 70S ribosome. This chain is Large ribosomal subunit protein uL2, found in Agrobacterium fabrum (strain C58 / ATCC 33970) (Agrobacterium tumefaciens (strain C58)).